Reading from the N-terminus, the 228-residue chain is L-ribulose-5-phosphate 4-epimerase UlaF (228 aa).

Substrate is bound by residues G26 to N27, S43 to G44, and S72 to S73. Zn(2+)-binding residues include D74, H93, and H95. D118 acts as the Proton donor/acceptor in catalysis. H167 contacts Zn(2+). Catalysis depends on Y225, which acts as the Proton donor/acceptor.

This sequence belongs to the aldolase class II family. AraD/FucA subfamily. Zn(2+) serves as cofactor.

It catalyses the reaction L-ribulose 5-phosphate = D-xylulose 5-phosphate. It participates in cofactor degradation; L-ascorbate degradation; D-xylulose 5-phosphate from L-ascorbate: step 4/4. In terms of biological role, catalyzes the isomerization of L-ribulose 5-phosphate to D-xylulose 5-phosphate. Is involved in the anaerobic L-ascorbate utilization. The polypeptide is L-ribulose-5-phosphate 4-epimerase UlaF (Shigella dysenteriae serotype 1 (strain Sd197)).